A 364-amino-acid chain; its full sequence is Suberization-associated anionic peroxidase 1 (364 aa).

The signal sequence occupies residues M1–Y25. An N-linked (GlcNAc...) asparagine glycan is attached at N36. Cystine bridges form between C81-C160 and C112-C117. The Proton acceptor role is filled by H110. Residues D111, V114, G116, and D118 each contribute to the Ca(2+) site. N-linked (GlcNAc...) asparagine glycans are attached at residues N127, N162, and N200. Disulfide bonds link C167/C353 and C246/C265. P209 provides a ligand contact to substrate. 2 N-linked (GlcNAc...) asparagine glycosylation sites follow: N214 and N226. H239 is a binding site for heme b. T240 is a binding site for Ca(2+). N264 is a glycosylation site (N-linked (GlcNAc...) asparagine). Residues D278, T280, and D285 each coordinate Ca(2+).

It belongs to the peroxidase family. Classical plant (class III) peroxidase subfamily. It depends on Ca(2+) as a cofactor. Heme b is required as a cofactor.

Its subcellular location is the secreted. It carries out the reaction 2 a phenolic donor + H2O2 = 2 a phenolic radical donor + 2 H2O. Functionally, removal of H(2)O(2), oxidation of toxic reductants, biosynthesis and degradation of lignin, suberization, auxin catabolism, response to environmental stresses such as wounding, pathogen attack and oxidative stress. These functions might be dependent on each isozyme/isoform in each plant tissue. Its function is as follows. Suggested to catalyze the deposition of the aromatic residues of suberin on the cell wall and thus play a role in cell-suberization. The polypeptide is Suberization-associated anionic peroxidase 1 (TAP1) (Solanum lycopersicum (Tomato)).